The following is a 498-amino-acid chain: Resveratrol cleavage oxygenase 1 (498 aa).

Positions 105 and 136 each coordinate piceatannol. The trans-resveratrol site is built by Tyr-105 and Lys-136. Fe cation contacts are provided by His-169, His-220, and His-285. Glu-355 serves as a coordination point for piceatannol. Trans-resveratrol is bound at residue Glu-355. Fe cation is bound at residue His-481.

Belongs to the carotenoid oxygenase family. Fe(2+) is required as a cofactor.

The catalysed reaction is trans-resveratrol + O2 = 3,5-dihydroxybenzaldehyde + 4-hydroxybenzaldehyde. It catalyses the reaction piceatannol + O2 = 3,5-dihydroxybenzaldehyde + 3,4-dihydroxybenzaldehyde. Functionally, dioxygenase that cleaves the interphenyl C-alpha-C-beta double bond of resveratrol to yield 3,5-dihydroxybenzaldehyde and 4-hydroxybenzaldehyde. Also cleaves piceatannol, a compound that differs from resveratrol only in the occurrence of an additional hydroxyl group, which leads to the production of 3,4-dihydroxybenzaldehyde and 3,5-hydroxybenzaldehyde. The polypeptide is Resveratrol cleavage oxygenase 1 (Aspergillus fumigatus (strain ATCC MYA-4609 / CBS 101355 / FGSC A1100 / Af293) (Neosartorya fumigata)).